A 2444-amino-acid chain; its full sequence is Protein SON (2444 aa).

Ala-2 carries the post-translational modification N-acetylalanine. An N6-acetyllysine modification is found at Lys-16. Positions 23-37 (ELSSGRSEGQLNGET) are enriched in polar residues. A disordered region spans residues 23-58 (ELSSGRSEGQLNGETNPPIEGNQAGDTAASARSLPN). Lys-64 is covalently cross-linked (Glycyl lysine isopeptide (Lys-Gly) (interchain with G-Cter in SUMO2)). The span at 79-88 (YKPDLKEASR) shows a compositional bias: basic and acidic residues. Residues 79–155 (YKPDLKEASR…GNLESDSFLK (77 aa)) form a disordered region. Ser-94 carries the phosphoserine modification. Residues 106–130 (KKSKKHKKHKNKKKKKKKEKEKKYK) are compositionally biased toward basic residues. A compositionally biased stretch (basic and acidic residues) spans 131 to 155 (RQPEESESKLKSHHDGNLESDSFLK). 4 positions are modified to phosphoserine: Ser-142, Ser-150, Ser-152, and Ser-158. Lys-284 bears the N6-acetyllysine mark. Disordered regions lie at residues 301–358 (TLTI…ESLE) and 391–468 (GPPV…PEPP). 2 stretches are compositionally biased toward pro residues: residues 393–406 (PVTP…PSAT) and 420–439 (PELP…PSVT). Thr-395 carries the post-translational modification Phosphothreonine. The segment at 721–850 (LASNTMDSQM…LATSSMDSQM (130 aa)) is 13 X 10 AA tandem repeats of L-A-[ST]-[NSG]-[TS]-MDSQM. An 11 X 7 AA tandem repeats of [DR]-P-Y-R-[LI][AG][QHP] region spans residues 907 to 983 (DPYRLAQDPY…IAPRPYRLAP (77 aa)). Omega-N-methylarginine is present on Arg-945. Thr-954 carries the post-translational modification Phosphothreonine. A Phosphoserine modification is found at Ser-993. Repeat copies occupy residues 1001–1006 (ERSMMS), 1009–1014 (ERSMMS), 1016–1021 (ERSMMS), 1025–1030 (ERSMMS), 1033–1038 (ERSMMS), 1041–1046 (ERSMMS), 1050–1055 (ERSMMS), 1058–1063 (ERSMMS), 1066–1071 (ERSMMS), 1075–1080 (DRSMMS), 1084–1089 (DRSMMS), 1095–1100 (DRSMMS), 1106–1111 (DRSMMS), and 1115–1120 (DRSMMS). Positions 1001 to 1120 (ERSMMSSYER…SSYTDRSMMS (120 aa)) are 14 X 6 AA repeats of [ED]-R-S-M-M-S. Residue Arg-1002 is modified to Asymmetric dimethylarginine. Arg-1017 is subject to Asymmetric dimethylarginine. Residues Ser-1030 and Ser-1038 each carry the phosphoserine modification. Phosphoserine is present on residues Ser-1055 and Ser-1063. Ser-1077 carries the phosphoserine modification. Residues 1141–1168 (PPLPPEEPPTMPPLPPEEPPMTPPLPPE) are compositionally biased toward pro residues. Positions 1141–1173 (PPLPPEEPPTMPPLPPEEPPMTPPLPPEEPPEG) are 3 X 11 AA tandem repats of P-P-L-P-P-E-E-P-P-[TME]-[MTG]. The tract at residues 1141 to 1213 (PPLPPEEPPT…PEPPVSQSEI (73 aa)) is disordered. Over residues 1177 to 1213 (STEQSALTADNTWSTEVTLSTGESLSQPEPPVSQSEI) the composition is skewed to polar residues. Phosphoserine occurs at positions 1678, 1723, 1727, 1772, 1784, 1791, 1794, 1807, and 1808. A disordered region spans residues 1802-2072 (ERASESSSEE…RSPKRLTDLD (271 aa)). 3 stretches are compositionally biased toward basic and acidic residues: residues 1815 to 1826 (YEIFVKVKDTHE), 1834 to 1847 (RDKG…DSSL), and 1855 to 1870 (KSSE…ESRS). 2 stretches are compositionally biased toward basic residues: residues 1871–1934 (RARK…RKRS) and 1942–1973 (AARA…RRRS). 7 consecutive repeat copies span residues 1950–1956 (PSRRSRS), 1959–1977 (PSRR…FSIS), 1978–1984 (PSRRSRT), 1985–1991 (PSRRSRT), 1992–1998 (PSRRSRT), 1999–2005 (PSRRSRT), and 2006–2012 (PSRRSRT). Positions 1950–2019 (PSRRSRSHTP…SRTPSRRRRS (70 aa)) are 7 X 7 AA repeats of P-S-R-R-S-R-[TS]. Residues 1959–2030 (PSRRRRSRSV…SAVRRRSFSI (72 aa)) form a 2 X 19 AA repeats of P-S-R-R-R-R-S-R-S-V-V-R-R-R-S-F-S-I-S region. 3 positions are modified to phosphoserine: Ser-1973, Ser-1975, and Ser-1977. Residues 1980–2027 (RRSRTPSRRSRTPSRRSRTPSRRSRTPSRRSRTPSRRRRSRSAVRRRS) are compositionally biased toward basic residues. A 2-7; approximate repeat occupies 2013–2019 (PSRRRRS). The stretch at 2020–2030 (RSAVRRRSFSI) is one 3-2; approximate repeat. Ser-2027, Ser-2029, Ser-2031, Ser-2047, and Ser-2049 each carry phosphoserine. Residues 2031 to 2057 (SPVRLRRSRTPLRRRFSRSPIRRKRSR) form a 3 X tandem repeats of [ST]-P-[VLI]-R-[RL]-[RK]-[RF]-S-R region. Residues 2034–2056 (RLRRSRTPLRRRFSRSPIRRKRS) show a composition bias toward basic residues. Residues 2057–2072 (RSSERGRSPKRLTDLD) show a composition bias toward basic and acidic residues. N6-acetyllysine; alternate is present on Lys-2073. Lys-2073 is covalently cross-linked (Glycyl lysine isopeptide (Lys-Gly) (interchain with G-Cter in SUMO2); alternate). A Glycyl lysine isopeptide (Lys-Gly) (interchain with G-Cter in SUMO2) cross-link involves residue Lys-2110. Ser-2147 carries the phosphoserine modification. Residue Lys-2167 forms a Glycyl lysine isopeptide (Lys-Gly) (interchain with G-Cter in SUMO2) linkage. Phosphothreonine is present on Thr-2181. Residues 2192-2238 (EFPVSSGSQHRKKEADSVYGEWVPVEKNGEESKDDDNVFSSSLPSEP) are disordered. Ser-2256 is subject to Phosphoserine. The G-patch domain maps to 2323–2369 (TGGMGAVLMRKMGWREGEGLGKNKEGNKEPILVDFKTDRKGLVAVGE). The region spanning 2389-2444 (HPVSALMEICNKRRWQPPEFLLVHDSGPDHRKHFLFRVLRNGSPYQPNCMFFLNRY) is the DRBM domain.

As to quaternary structure, interacts with SRSF2. Associates with the spliceosome. Interacts with USH1G. In terms of tissue distribution, widely expressed. Highly expressed in brain, heart, spleen, liver, skeletal muscle, kidney and testis.

It localises to the nucleus speckle. RNA-binding protein that acts as a mRNA splicing cofactor by promoting efficient splicing of transcripts that possess weak splice sites. Specifically promotes splicing of many cell-cycle and DNA-repair transcripts that possess weak splice sites, such as TUBG1, KATNB1, TUBGCP2, AURKB, PCNT, AKT1, RAD23A, and FANCG. Probably acts by facilitating the interaction between Serine/arginine-rich proteins such as SRSF2 and the RNA polymerase II. Also binds to DNA; binds to the consensus DNA sequence: 5'-GA[GT]AN[CG][AG]CC-3'. Essential for correct RNA splicing of multiple genes critical for brain development, neuronal migration and metabolism, including TUBG1, FLNA, PNKP, WDR62, PSMD3, PCK2, PFKL, IDH2, and ACY1. May also regulate the ghrelin signaling in hypothalamic neuron by acting as a negative regulator of GHSR expression. The protein is Protein SON (Son) of Mus musculus (Mouse).